The chain runs to 57 residues: Large ribosomal subunit protein bL32 (57 aa).

The segment covering Met1–Trp20 has biased composition (basic residues). The disordered stretch occupies residues Met1–Ala22.

Belongs to the bacterial ribosomal protein bL32 family.

The sequence is that of Large ribosomal subunit protein bL32 from Mycobacterium sp. (strain JLS).